Consider the following 119-residue polypeptide: Protein yippee-like 2 (119 aa).

Residues 19–116 form the Yippee domain; that stretch reads RTYSCIHCRA…IELAHMIKDN (98 aa). Zn(2+) contacts are provided by Cys-23, Cys-26, Cys-79, and Cys-82.

This sequence belongs to the yippee family. May interact with FAM168B.

The protein resides in the nucleus. It localises to the nucleolus. The polypeptide is Protein yippee-like 2 (YPEL2) (Chlorocebus aethiops (Green monkey)).